The chain runs to 433 residues: 3-phosphoshikimate 1-carboxyvinyltransferase (433 aa).

3-phosphoshikimate is bound by residues Lys-22, Ser-23, and Arg-27. Lys-22 serves as a coordination point for phosphoenolpyruvate. 2 residues coordinate phosphoenolpyruvate: Gly-95 and Arg-123. 3-phosphoshikimate-binding residues include Ser-167, Gln-169, Asp-315, and Lys-342. Gln-169 contacts phosphoenolpyruvate. Catalysis depends on Asp-315, which acts as the Proton acceptor. Phosphoenolpyruvate is bound by residues Arg-346 and Arg-387.

This sequence belongs to the EPSP synthase family. In terms of assembly, monomer.

It is found in the cytoplasm. The enzyme catalyses 3-phosphoshikimate + phosphoenolpyruvate = 5-O-(1-carboxyvinyl)-3-phosphoshikimate + phosphate. Its pathway is metabolic intermediate biosynthesis; chorismate biosynthesis; chorismate from D-erythrose 4-phosphate and phosphoenolpyruvate: step 6/7. In terms of biological role, catalyzes the transfer of the enolpyruvyl moiety of phosphoenolpyruvate (PEP) to the 5-hydroxyl of shikimate-3-phosphate (S3P) to produce enolpyruvyl shikimate-3-phosphate and inorganic phosphate. This chain is 3-phosphoshikimate 1-carboxyvinyltransferase, found in Legionella pneumophila (strain Lens).